Here is a 591-residue protein sequence, read N- to C-terminus: Protein phosphatase EYA1 (591 aa).

Disordered stretches follow at residues 1-95 (MEMQ…SYPH), 150-169 (GLSQSQSPGQTGFLSYGTSF), and 239-319 (MTSS…PDSD). A compositionally biased stretch (low complexity) spans 8-23 (SPHSRLSGSSESPSGP). Positions 28–53 (SHINSTSMTPNGTEVKTEPMSSSEIA) are enriched in polar residues. The segment covering 56–75 (AADGSLDSFSGSALGSSSFS) has biased composition (low complexity). Residues 78-87 (PAHPFSPPQI) show a composition bias toward pro residues. Residues 240–252 (TSSNTSPTTPSTN) are compositionally biased toward low complexity. Over residues 253 to 286 (ATYQLQEPPSGVTSQAVTDPTAEYSTIHSPSTPI) the composition is skewed to polar residues. Residues 287–302 (KETDSERLRRGSDGKS) show a composition bias toward basic and acidic residues. Asp327 functions as the Nucleophile in the catalytic mechanism. Mg(2+) is bound by residues Asp327, Asp329, and Asp555. Asp329 acts as the Proton donor in catalysis.

This sequence belongs to the HAD-like hydrolase superfamily. EYA family. In terms of assembly, probably interacts with SIX2, SIX4 and SIX5. Interacts with H2AX in response to DNA damage. Interacts with SIX3; promotes EYA1 translocation to the nucleus. The cofactor is Mg(2+). Sumoylated with SUMO1. In terms of tissue distribution, extensively expressed in cranial placodes, branchial arches, CNS and developing eye and nose.

The protein resides in the cytoplasm. Its subcellular location is the nucleus. It catalyses the reaction O-phospho-L-tyrosyl-[protein] + H2O = L-tyrosyl-[protein] + phosphate. The catalysed reaction is O-phospho-L-seryl-[protein] + H2O = L-seryl-[protein] + phosphate. It carries out the reaction O-phospho-L-threonyl-[protein] + H2O = L-threonyl-[protein] + phosphate. Functionally, functions both as protein phosphatase and as transcriptional coactivator for SIX1, and probably also for SIX2, SIX4 and SIX5. Tyrosine phosphatase that dephosphorylates 'Tyr-142' of histone H2AX (H2AXY142ph) and promotes efficient DNA repair via the recruitment of DNA repair complexes containing MDC1. 'Tyr-142' phosphorylation of histone H2AX plays a central role in DNA repair and acts as a mark that distinguishes between apoptotic and repair responses to genotoxic stress. Its function as histone phosphatase may contribute to its function in transcription regulation during organogenesis. Also has phosphatase activity with proteins phosphorylated on Ser and Thr residues (in vitro). Required for normal embryonic development of the craniofacial and trunk skeleton, kidneys and ears. Together with SIX1, it plays an important role in hypaxial muscle development; in this it is functionally redundant with EYA2. This chain is Protein phosphatase EYA1 (Eya1), found in Mus musculus (Mouse).